A 263-amino-acid chain; its full sequence is ATP synthase subunit a (263 aa).

6 consecutive transmembrane segments (helical) span residues valine 26–serine 46, valine 86–isoleucine 106, aspartate 130–isoleucine 150, proline 166–alanine 186, leucine 195–alanine 215, and leucine 229–leucine 249.

It belongs to the ATPase A chain family. F-type ATPases have 2 components, CF(1) - the catalytic core - and CF(0) - the membrane proton channel. CF(1) has five subunits: alpha(3), beta(3), gamma(1), delta(1), epsilon(1). CF(0) has three main subunits: a(1), b(2) and c(9-12). The alpha and beta chains form an alternating ring which encloses part of the gamma chain. CF(1) is attached to CF(0) by a central stalk formed by the gamma and epsilon chains, while a peripheral stalk is formed by the delta and b chains.

It localises to the cell inner membrane. Key component of the proton channel; it plays a direct role in the translocation of protons across the membrane. The polypeptide is ATP synthase subunit a (Glaesserella parasuis serovar 5 (strain SH0165) (Haemophilus parasuis)).